A 920-amino-acid chain; its full sequence is Nitrate reductase [NADH] (920 aa).

The segment at 1–69 (MAASVENRQF…DTSDDEEDEA (69 aa)) is disordered. Over residues 60-69 (DTSDDEEDEA) the composition is skewed to acidic residues. Cysteine 185 is a binding site for Mo-molybdopterin. A Cytochrome b5 heme-binding domain is found at 534–609 (SLTFTMSEVK…LEEYRVGELI (76 aa)). Heme contacts are provided by histidine 569 and histidine 592. In terms of domain architecture, FAD-binding FR-type spans 663 to 775 (REKIPCKLIS…KGPLGHIEYM (113 aa)). FAD-binding positions include 715–718 (RAYT), 732–736 (LVKIY), phenylalanine 737, phenylalanine 744, 749–751 (LMS), and threonine 802.

The protein belongs to the nitrate reductase family. Homodimer. FAD serves as cofactor. Heme is required as a cofactor. The cofactor is Mo-molybdopterin. In terms of tissue distribution, in cortical cells of roots grown at low nitrate concentrations, in vascular tissues of roots at high nitrate concentrations and in root apex under both conditions.

The catalysed reaction is nitrite + NAD(+) + H2O = nitrate + NADH + H(+). In terms of biological role, nitrate reductase is a key enzyme involved in the first step of nitrate assimilation in plants, fungi and bacteria. The protein is Nitrate reductase [NADH] (NIA) of Cichorium intybus (Chicory).